The following is a 157-amino-acid chain: Thioredoxin 2 (157 aa).

A signal peptide spans 1-23 (MKKYIFFFLFSFINFFFVYDVTC). In terms of domain architecture, Thioredoxin spans 46-157 (LRMFKKVPRL…DLIALIKKHL (112 aa)). Active-site nucleophile residues include cysteine 82 and cysteine 85. The cysteines at positions 82 and 85 are disulfide-linked.

It belongs to the thioredoxin family. Monomer. Component of the Plasmodium translocon of exported proteins (PTEX) complex composed of HSP101, EXP2, PTEX150, PTEX88 and TRX2. In terms of processing, the disulfide bond between Cys-82 and Cys-85 acts as a redox-active center and is reduced by thioredoxin reductase TRXR.

It is found in the parasitophorous vacuole membrane. Functionally, participates in various redox reactions through the reversible oxidation of its active center dithiol to a disulfide and catalyzes dithiol-disulfide exchange reactions. As part of the translocon PTEX complex, plays a role in the export of parasite proteins into the host erythrocyte. The translocon PTEX complex is a multi-protein machinery resident in the parasite parasitophorous vacuolar membrane, responsible for protein secretion into host cells. May contribute to the unfolding of proteins containing the PEXEL localization motif before their passage through the translocon or regulate the PTEX complex function. The protein is Thioredoxin 2 of Plasmodium falciparum (isolate 3D7).